The primary structure comprises 182 residues: UPF0316 protein Sde_0566 (182 aa).

The next 3 membrane-spanning stretches (helical) occupy residues 7–27, 41–61, and 67–87; these read VAPE…VSLG, LAAF…GQVF, and WYLA…GMWI.

Belongs to the UPF0316 family.

It is found in the cell membrane. The sequence is that of UPF0316 protein Sde_0566 from Saccharophagus degradans (strain 2-40 / ATCC 43961 / DSM 17024).